A 349-amino-acid chain; its full sequence is Anthranilate phosphoribosyltransferase (349 aa).

5-phospho-alpha-D-ribose 1-diphosphate-binding positions include glycine 82, 85-86 (GD), 92-95 (NVST), 110-118 (KHGNRGVSS), and serine 122. Glycine 82 serves as a coordination point for anthranilate. Serine 94 is a binding site for Mg(2+). Asparagine 113 is an anthranilate binding site. Anthranilate is bound at residue arginine 168. Residues aspartate 227 and glutamate 228 each coordinate Mg(2+).

Belongs to the anthranilate phosphoribosyltransferase family. Homodimer. Mg(2+) is required as a cofactor.

The enzyme catalyses N-(5-phospho-beta-D-ribosyl)anthranilate + diphosphate = 5-phospho-alpha-D-ribose 1-diphosphate + anthranilate. It functions in the pathway amino-acid biosynthesis; L-tryptophan biosynthesis; L-tryptophan from chorismate: step 2/5. Functionally, catalyzes the transfer of the phosphoribosyl group of 5-phosphorylribose-1-pyrophosphate (PRPP) to anthranilate to yield N-(5'-phosphoribosyl)-anthranilate (PRA). This chain is Anthranilate phosphoribosyltransferase, found in Acinetobacter baumannii (strain SDF).